Here is a 97-residue protein sequence, read N- to C-terminus: Co-chaperonin GroES (97 aa).

It belongs to the GroES chaperonin family. As to quaternary structure, heptamer of 7 subunits arranged in a ring. Interacts with the chaperonin GroEL.

The protein resides in the cytoplasm. In terms of biological role, together with the chaperonin GroEL, plays an essential role in assisting protein folding. The GroEL-GroES system forms a nano-cage that allows encapsulation of the non-native substrate proteins and provides a physical environment optimized to promote and accelerate protein folding. GroES binds to the apical surface of the GroEL ring, thereby capping the opening of the GroEL channel. The chain is Co-chaperonin GroES from Pseudarthrobacter chlorophenolicus (strain ATCC 700700 / DSM 12829 / CIP 107037 / JCM 12360 / KCTC 9906 / NCIMB 13794 / A6) (Arthrobacter chlorophenolicus).